Here is a 159-residue protein sequence, read N- to C-terminus: NADH-quinone oxidoreductase subunit B (159 aa).

[4Fe-4S] cluster contacts are provided by Cys37, Cys38, Cys102, and Cys132.

It belongs to the complex I 20 kDa subunit family. As to quaternary structure, NDH-1 is composed of 14 different subunits. Subunits NuoB, C, D, E, F, and G constitute the peripheral sector of the complex. Requires [4Fe-4S] cluster as cofactor.

Its subcellular location is the cell inner membrane. It carries out the reaction a quinone + NADH + 5 H(+)(in) = a quinol + NAD(+) + 4 H(+)(out). Functionally, NDH-1 shuttles electrons from NADH, via FMN and iron-sulfur (Fe-S) centers, to quinones in the respiratory chain. Couples the redox reaction to proton translocation (for every two electrons transferred, four hydrogen ions are translocated across the cytoplasmic membrane), and thus conserves the redox energy in a proton gradient. The sequence is that of NADH-quinone oxidoreductase subunit B from Paraburkholderia phymatum (strain DSM 17167 / CIP 108236 / LMG 21445 / STM815) (Burkholderia phymatum).